Reading from the N-terminus, the 447-residue chain is Phosphoglucosamine mutase (447 aa).

Ser-101 functions as the Phosphoserine intermediate in the catalytic mechanism. Residues Ser-101, Asp-242, Asp-244, and Asp-246 each contribute to the Mg(2+) site. Ser-101 carries the phosphoserine modification.

The protein belongs to the phosphohexose mutase family. Mg(2+) is required as a cofactor. Activated by phosphorylation.

The enzyme catalyses alpha-D-glucosamine 1-phosphate = D-glucosamine 6-phosphate. Functionally, catalyzes the conversion of glucosamine-6-phosphate to glucosamine-1-phosphate. This Xanthobacter autotrophicus (strain ATCC BAA-1158 / Py2) protein is Phosphoglucosamine mutase.